Consider the following 292-residue polypeptide: D-alanyl-D-alanine endopeptidase (292 aa).

The signal sequence occupies residues methionine 1–alanine 18. The active-site Acyl-ester intermediate is serine 45. The Proton acceptor role is filled by lysine 48. Serine 102 is a catalytic residue. Residue lysine 207 coordinates substrate.

This sequence belongs to the peptidase S11 family.

Its subcellular location is the periplasm. Its function is as follows. Cell wall formation. May play a specialized role in remodeling the cell wall. Specifically hydrolyzes the DD-diaminopimelate-alanine bonds in high-molecular-mass murein sacculi. The chain is D-alanyl-D-alanine endopeptidase (pbpG) from Haemophilus influenzae (strain ATCC 51907 / DSM 11121 / KW20 / Rd).